The chain runs to 330 residues: UPF0353 protein MAP_3434 (330 aa).

2 consecutive transmembrane segments (helical) span residues 21–41 (GMLL…VVQA) and 63–83 (LPIA…ATPT). The 196-residue stretch at 94–289 (VIMLVIDMSQ…GELQKSYNAI (196 aa)) folds into the VWFA domain. The helical transmembrane segment at 304 to 324 (AGWLRLGVLTALIATALALLI) threads the bilayer.

The protein belongs to the UPF0353 family.

The protein resides in the cell membrane. The chain is UPF0353 protein MAP_3434 from Mycolicibacterium paratuberculosis (strain ATCC BAA-968 / K-10) (Mycobacterium paratuberculosis).